We begin with the raw amino-acid sequence, 453 residues long: Trigger factor (453 aa).

The PPIase FKBP-type domain occupies 171 to 256 (GDRVTINFKG…ATSIEAPQDI (86 aa)).

Belongs to the FKBP-type PPIase family. Tig subfamily.

The protein localises to the cytoplasm. It catalyses the reaction [protein]-peptidylproline (omega=180) = [protein]-peptidylproline (omega=0). Involved in protein export. Acts as a chaperone by maintaining the newly synthesized protein in an open conformation. Functions as a peptidyl-prolyl cis-trans isomerase. This chain is Trigger factor, found in Bradyrhizobium diazoefficiens (strain JCM 10833 / BCRC 13528 / IAM 13628 / NBRC 14792 / USDA 110).